Reading from the N-terminus, the 947-residue chain is Translation initiation factor IF-2 (947 aa).

Residues 47–332 are disordered; it reads LRESFGGGKS…RGRKSKRAKR (286 aa). The segment covering 86-95 has biased composition (basic and acidic residues); it reads APDRSLDAAL. The segment covering 105–123 has biased composition (pro residues); the sequence is APVPAPAPAPTPAPAPAPA. Residues 131 to 145 are compositionally biased toward low complexity; the sequence is APPAATPAAPAASAA. Composition is skewed to pro residues over residues 146 to 171 and 210 to 225; these read PAPP…PQAP and PRPQ…PGAP. A compositionally biased stretch (gly residues) spans 255 to 318; sequence RPGGGRPGGP…GAAGAFGRPG (64 aa). Residues 322–331 are compositionally biased toward basic residues; it reads RRGRKSKRAK. One can recognise a tr-type G domain in the interval 443 to 614; that stretch reads TRPPVVTVMG…AVLLTADAAL (172 aa). Residues 452–459 form a G1 region; it reads GHVDHGKT. Position 452 to 459 (452 to 459) interacts with GTP; it reads GHVDHGKT. A G2 region spans residues 477-481; that stretch reads GITQH. A G3 region spans residues 502–505; it reads DTPG. Residues 502 to 506 and 556 to 559 each bind GTP; these read DTPGH and NKID. The segment at 556 to 559 is G4; it reads NKID. A G5 region spans residues 592–594; it reads SAK.

The protein belongs to the TRAFAC class translation factor GTPase superfamily. Classic translation factor GTPase family. IF-2 subfamily.

Its subcellular location is the cytoplasm. In terms of biological role, one of the essential components for the initiation of protein synthesis. Protects formylmethionyl-tRNA from spontaneous hydrolysis and promotes its binding to the 30S ribosomal subunits. Also involved in the hydrolysis of GTP during the formation of the 70S ribosomal complex. This Mycobacterium marinum (strain ATCC BAA-535 / M) protein is Translation initiation factor IF-2.